A 221-amino-acid polypeptide reads, in one-letter code: MQARIDATLNEHNRPEGSVRLLPVTKFHPVEDIKILQEFGVTAVGENREQEARAKALELPDMDFHMIGQIQSKKANSIARWAAAVHSVDSEKIAEALGRGVALALDRGDRTSDELPCFIQLSLDGDPSRGGTPLSQVTQLADCISDTTHLRFEGLMCVPPLGWGPEKAFSQARDVLSGLEEHFDRSLEFSAGMSGDLVAAIKHGSTIVRVGTEILGNRPLA.

K26 carries the post-translational modification N6-(pyridoxal phosphate)lysine.

It belongs to the pyridoxal phosphate-binding protein YggS/PROSC family.

Pyridoxal 5'-phosphate (PLP)-binding protein, which is involved in PLP homeostasis. This Corynebacterium glutamicum (strain ATCC 13032 / DSM 20300 / JCM 1318 / BCRC 11384 / CCUG 27702 / LMG 3730 / NBRC 12168 / NCIMB 10025 / NRRL B-2784 / 534) protein is Pyridoxal phosphate homeostasis protein.